The following is a 118-amino-acid chain: Protein TusC (118 aa).

Belongs to the DsrF/TusC family. In terms of assembly, heterohexamer, formed by a dimer of trimers. The hexameric TusBCD complex contains 2 copies each of TusB, TusC and TusD. The TusBCD complex interacts with TusE.

The protein resides in the cytoplasm. Functionally, part of a sulfur-relay system required for 2-thiolation of 5-methylaminomethyl-2-thiouridine (mnm(5)s(2)U) at tRNA wobble positions. The protein is Protein TusC of Salmonella agona (strain SL483).